The primary structure comprises 89 residues: Barrier-to-autointegration factor 1 (89 aa).

Belongs to the BAF family. In terms of assembly, interacts with emr-1 and lem-2. Interacts with lem-4l, leading to decreased phosphorylation by VRK1 and promoting dephosphorylation by protein phosphatase 2A (PP2A). Phosphorylated by vrk-1. Phosphorylation by vrk-1 in mitosis is essential to achieve correct timing of recruitment of nuclear envelope components during nuclear envelope assembly. Dephosphorylated by protein phosphatase 2A (PP2A) following interaction with lem-4l during mitotic exit, leading to mitotic nuclear envelope reassembly.

It localises to the nucleus. Functionally, DNA-binding protein which plays an essential role in nuclear envelope formation. Required for normal chromosome segregation during mitosis. Associates with the nuclear lamina via its interaction with LEM domain containing proteins emr-1 and lem-2. In association with lem-3, plays a role in radiation-induced DNA damage repair response. The chain is Barrier-to-autointegration factor 1 (baf-1) from Caenorhabditis elegans.